The sequence spans 476 residues: Arginine biosynthesis bifunctional protein ArgJ, mitochondrial (476 aa).

Substrate is bound by residues threonine 204, lysine 233, threonine 244, glutamate 331, asparagine 471, and threonine 476. Residue threonine 244 is the Nucleophile of the active site.

Belongs to the ArgJ family. As to quaternary structure, heterodimer of an alpha and a beta chain. In terms of processing, the alpha and beta chains are autoproteolytically processed from a single precursor protein within the mitochondrion.

It localises to the mitochondrion matrix. The enzyme catalyses N(2)-acetyl-L-ornithine + L-glutamate = N-acetyl-L-glutamate + L-ornithine. It catalyses the reaction L-glutamate + acetyl-CoA = N-acetyl-L-glutamate + CoA + H(+). The protein operates within amino-acid biosynthesis; L-arginine biosynthesis; L-ornithine and N-acetyl-L-glutamate from L-glutamate and N(2)-acetyl-L-ornithine (cyclic): step 1/1. Its pathway is amino-acid biosynthesis; L-arginine biosynthesis; N(2)-acetyl-L-ornithine from L-glutamate: step 1/4. Functionally, catalyzes two activities which are involved in the cyclic version of arginine biosynthesis: the synthesis of acetylglutamate from glutamate and acetyl-CoA, and of ornithine by transacetylation between acetylornithine and glutamate. The chain is Arginine biosynthesis bifunctional protein ArgJ, mitochondrial from Arthroderma otae (strain ATCC MYA-4605 / CBS 113480) (Microsporum canis).